Reading from the N-terminus, the 576-residue chain is 2-isopropylmalate synthase (576 aa).

The Pyruvate carboxyltransferase domain occupies 31–305 (PIWMSTDLRD…DPGLDFSHVN (275 aa)). Residues aspartate 40, histidine 244, histidine 246, and asparagine 280 each contribute to the Mg(2+) site. The tract at residues 437–576 (ADGPIGYVSH…RGMAPSMELA (140 aa)) is regulatory domain.

The protein belongs to the alpha-IPM synthase/homocitrate synthase family. LeuA type 2 subfamily. As to quaternary structure, homodimer. Mg(2+) is required as a cofactor.

It is found in the cytoplasm. It catalyses the reaction 3-methyl-2-oxobutanoate + acetyl-CoA + H2O = (2S)-2-isopropylmalate + CoA + H(+). It functions in the pathway amino-acid biosynthesis; L-leucine biosynthesis; L-leucine from 3-methyl-2-oxobutanoate: step 1/4. Catalyzes the condensation of the acetyl group of acetyl-CoA with 3-methyl-2-oxobutanoate (2-ketoisovalerate) to form 3-carboxy-3-hydroxy-4-methylpentanoate (2-isopropylmalate). This is 2-isopropylmalate synthase from Ralstonia nicotianae (strain ATCC BAA-1114 / GMI1000) (Ralstonia solanacearum).